A 300-amino-acid chain; its full sequence is Glutamyl-Q tRNA(Asp) synthetase (300 aa).

Residues 8-12 (RFAPT) and Asp44 each bind L-glutamate. Positions 11-21 (PTPSGDLHLGS) match the 'HIGH' region motif. Residues Cys100, Cys102, Tyr122, and Cys126 each coordinate Zn(2+). Positions 181 and 199 each coordinate L-glutamate. The 'KMSKS' region signature appears at 237–241 (KLSKQ). Position 240 (Lys240) interacts with ATP.

It belongs to the class-I aminoacyl-tRNA synthetase family. GluQ subfamily. It depends on Zn(2+) as a cofactor.

Its function is as follows. Catalyzes the tRNA-independent activation of glutamate in presence of ATP and the subsequent transfer of glutamate onto a tRNA(Asp). Glutamate is transferred on the 2-amino-5-(4,5-dihydroxy-2-cyclopenten-1-yl) moiety of the queuosine in the wobble position of the QUC anticodon. The polypeptide is Glutamyl-Q tRNA(Asp) synthetase (Synechococcus sp. (strain ATCC 27144 / PCC 6301 / SAUG 1402/1) (Anacystis nidulans)).